The primary structure comprises 178 residues: RNA-binding protein (178 aa).

Residues 108 to 178 are disordered; the sequence is SGFQKPKIGS…KGKGRRGGKR (71 aa). Basic residues predominate over residues 168–178; that stretch reads SKGKGRRGGKR.

This sequence belongs to the phytoreovirus RNA-binding protein family.

It localises to the host cytoplasm. Its function is as follows. Constituent of viral factories. Binds to ssRNA and dsRNA. This Wound tumor virus (strain NJ) (WTV) protein is RNA-binding protein.